A 49-amino-acid polypeptide reads, in one-letter code: Large ribosomal subunit protein bL34 (49 aa).

Belongs to the bacterial ribosomal protein bL34 family.

The protein is Large ribosomal subunit protein bL34 of Sorangium cellulosum (strain So ce56) (Polyangium cellulosum (strain So ce56)).